The following is a 512-amino-acid chain: Maturase K (512 aa).

This sequence belongs to the intron maturase 2 family. MatK subfamily.

It is found in the plastid. It localises to the chloroplast. In terms of biological role, usually encoded in the trnK tRNA gene intron. Probably assists in splicing its own and other chloroplast group II introns. This Piper cenocladum (Ant piper) protein is Maturase K.